We begin with the raw amino-acid sequence, 312 residues long: Ornithine carbamoyltransferase (312 aa).

Carbamoyl phosphate is bound by residues 59–62 (STRT), Q86, R110, and 137–140 (HPCQ). L-ornithine-binding positions include N167, D231, and 235-236 (SM). Positions 271 and 299 each coordinate carbamoyl phosphate.

Belongs to the aspartate/ornithine carbamoyltransferase superfamily. OTCase family.

The protein resides in the cytoplasm. The catalysed reaction is carbamoyl phosphate + L-ornithine = L-citrulline + phosphate + H(+). The protein operates within amino-acid biosynthesis; L-arginine biosynthesis; L-arginine from L-ornithine and carbamoyl phosphate: step 1/3. In terms of biological role, reversibly catalyzes the transfer of the carbamoyl group from carbamoyl phosphate (CP) to the N(epsilon) atom of ornithine (ORN) to produce L-citrulline. This Methanopyrus kandleri (strain AV19 / DSM 6324 / JCM 9639 / NBRC 100938) protein is Ornithine carbamoyltransferase.